The following is a 778-amino-acid chain: Arf-GAP with coiled-coil, ANK repeat and PH domain-containing protein 2 (778 aa).

Positions 1–226 (MKMTVDFEEC…MKDLGAQLDR (226 aa)) constitute a BAR domain. One can recognise a PH domain in the interval 266–361 (GIVMEGYLFK…WIKAVQTSIA (96 aa)). Residues 371 to 391 (SEKLDKKSSPSTGSLDSGNES) form a disordered region. Polar residues predominate over residues 379 to 388 (SPSTGSLDSG). Phosphoserine occurs at positions 384 and 387. One can recognise an Arf-GAP domain in the interval 399-520 (ESALQRVQCI…KFVDKYSISL (122 aa)). A C4-type zinc finger spans residues 414-437 (CCDCGLADPRWASINLGITLCIEC). Residue Ser-521 is modified to Phosphoserine. A disordered region spans residues 540–599 (SISKFGPGDQVRASAQSSVRSNDSGIQQSSDDGRESLPSTVSANSLYEPEGERQDSSMFL). The span at 552–569 (ASAQSSVRSNDSGIQQSS) shows a compositional bias: polar residues. Ser-581 and Ser-584 each carry phosphoserine. ANK repeat units lie at residues 640 to 669 (NKAT…NVNQ), 673 to 702 (QGRG…NQHA), and 706 to 735 (EGKD…NEEM). Tyr-742 carries the phosphotyrosine modification. Ser-775 carries the post-translational modification Phosphoserine.

In terms of assembly, interacts (via KANK domains) with RAB35 (GTP-bound form); the interaction is direct and probably recruits ACAP2 to membranes including plasma membrane. Interacts with MICALL1; the interaction is indirect through RAB35. In terms of tissue distribution, widely expressed. Highest level in lung.

Its subcellular location is the cell membrane. The protein resides in the endosome membrane. With respect to regulation, GAP activity stimulated by phosphatidylinositol 4,5-bisphosphate (PIP2) and phosphatidic acid. Functionally, GTPase-activating protein (GAP) for ADP ribosylation factor 6 (ARF6). Doesn't show GAP activity for RAB35. The chain is Arf-GAP with coiled-coil, ANK repeat and PH domain-containing protein 2 (ACAP2) from Homo sapiens (Human).